A 225-amino-acid chain; its full sequence is UPF0758 protein Sputw3181_0338 (225 aa).

Residues 102–224 (VLTNPDLTRD…IVSFAERGWI (123 aa)) form the MPN domain. His173, His175, and Asp186 together coordinate Zn(2+). The JAMM motif motif lies at 173–186 (HNHPSGIAEPSQAD).

Belongs to the UPF0758 family.

This is UPF0758 protein Sputw3181_0338 from Shewanella sp. (strain W3-18-1).